We begin with the raw amino-acid sequence, 290 residues long: TP53-target gene 5 protein (290 aa).

The segment covering M1–R13 has biased composition (basic residues). Disordered regions lie at residues M1–P29 and K114–L178. Composition is skewed to basic and acidic residues over residues K16 to T26, K114 to K130, and R138 to S167.

As to quaternary structure, interacts with p53/TP53. In terms of tissue distribution, highly expressed in heart, brain and small intestine. Less abundant in skeletal muscle, spleen, prostate, ovary and colon. A smaller transcript is expressed specifically in the testis.

The protein resides in the cytoplasm. The protein localises to the nucleus. Functionally, may play a significant role in p53/TP53-mediating signaling pathway. The chain is TP53-target gene 5 protein (TP53TG5) from Homo sapiens (Human).